Consider the following 202-residue polypeptide: MDYLPVLFSLLLVVFQGAPEAAVLGAELSTGPDSGGEKPAPSAPWRPRRSKRCSCSSLLDKECVYFCHLDIIWVNTPEHIVPYGLGSPSRSKRSLKDLFATKATDHRNRCQCASQKDKKCWTFCQVRKELRGQDSMEKGWDDQKKGKDCSELGEKCTHHQLVAGRKIRRLDAVRNSIKTAFRVAKLKAEIYREKKVTHNRTH.

An N-terminal signal peptide occupies residues 1–25 (MDYLPVLFSLLLVVFQGAPEAAVLG). Positions 26–50 (AELSTGPDSGGEKPAPSAPWRPRRS) are excised as a propeptide. A disordered region spans residues 28 to 48 (LSTGPDSGGEKPAPSAPWRPR). Cystine bridges form between C53–C67 and C55–C63. Residues 74–202 (VNTPEHIVPY…EKKVTHNRTH (129 aa)) constitute a propeptide that is removed on maturation. Residues 110 to 124 (CQCASQKDKKCWTFC) are endothelin-like.

Belongs to the endothelin/sarafotoxin family.

It is found in the secreted. Endothelins are endothelium-derived vasoconstrictor peptides. Probable ligand for G-protein coupled receptors EDNRA and EDNRB which activates PTK2B, BCAR1, BCAR3 and, GTPases RAP1 and RHOA cascade in glomerular mesangial cells. Also binds the DEAR/FBXW7-AS1 receptor. Promotes mesenteric arterial wall remodeling via activation of ROCK signaling and subsequent colocalization of NFATC3 with F-actin filaments. NFATC3 then translocates to the nucleus where it subsequently promotes the transcription of the smooth muscle hypertrophy and differentiation marker ACTA2. The polypeptide is Endothelin-1 (EDN1) (Felis catus (Cat)).